The primary structure comprises 397 residues: Subtilisin-like protease 3 (397 aa).

Positions 1–19 are cleaved as a signal peptide; sequence MGCIKVISVFLAAIAAVDA. Residues 20-116 constitute a propeptide that is removed on maturation; it reads RAFFHNRGGS…VEHDRVVKLA (97 aa). The 82-residue stretch at 35–116 folds into the Inhibitor I9 domain; sequence SYIVVMKDGV…VEHDRVVKLA (82 aa). One can recognise a Peptidase S8 domain in the interval 126–397; that stretch reads TWGLGRVSHR…NRLLYNGSGQ (272 aa). Catalysis depends on charge relay system residues D158 and H189. N250 carries an N-linked (GlcNAc...) asparagine glycan. S344 functions as the Charge relay system in the catalytic mechanism. N393 is a glycosylation site (N-linked (GlcNAc...) asparagine).

It belongs to the peptidase S8 family.

Its subcellular location is the secreted. Functionally, secreted subtilisin-like serine protease with keratinolytic activity that contributes to pathogenicity. The polypeptide is Subtilisin-like protease 3 (SUB3) (Trichophyton tonsurans (Scalp ringworm fungus)).